The following is a 163-amino-acid chain: Transcriptional repressor NrdR (163 aa).

A zinc finger spans residues 3 to 34 (CPFCRHDDSRVVDSRTTDDGSSIRRRRQCPNC). Residues 46 to 136 (LSVIKRSGAP…VYQAFDSLAD (91 aa)) form the ATP-cone domain.

The protein belongs to the NrdR family. The cofactor is Zn(2+).

In terms of biological role, negatively regulates transcription of bacterial ribonucleotide reductase nrd genes and operons by binding to NrdR-boxes. This chain is Transcriptional repressor NrdR, found in Kineococcus radiotolerans (strain ATCC BAA-149 / DSM 14245 / SRS30216).